The chain runs to 426 residues: Lipase 7 (426 aa).

An N-terminal signal peptide occupies residues 1 to 15 (MFVFLALITLTTCLQ). 3 N-linked (GlcNAc...) asparagine glycosylation sites follow: asparagine 74, asparagine 175, and asparagine 179. 2 disulfide bridges follow: cysteine 108–cysteine 269 and cysteine 341–cysteine 385. Catalysis depends on serine 190, which acts as the Charge relay system. A glycan (N-linked (GlcNAc...) asparagine) is linked at asparagine 223. Histidine 358 acts as the Charge relay system in catalysis. Residues asparagine 378, asparagine 379, asparagine 422, and asparagine 423 are each glycosylated (N-linked (GlcNAc...) asparagine).

It belongs to the AB hydrolase superfamily. Lipase family. Class Lip subfamily.

It carries out the reaction a triacylglycerol + H2O = a diacylglycerol + a fatty acid + H(+). Secreted lipase that is able to hydrolze both the neutral triacylglycerols and the monopalmitate ester Tween 40, allowing the use of hydrolyzed products as carbon sources. Has broad lipolytic activity, which may be important for colonization and subsequent infection, therefore contributing to the persistence and virulence in human tissue. The protein is Lipase 7 of Candida albicans (strain SC5314 / ATCC MYA-2876) (Yeast).